Consider the following 198-residue polypeptide: 7-methyl-GTP pyrophosphatase (198 aa).

Asp69 serves as the catalytic Proton acceptor.

The protein belongs to the Maf family. YceF subfamily. It depends on a divalent metal cation as a cofactor.

It is found in the cytoplasm. The enzyme catalyses N(7)-methyl-GTP + H2O = N(7)-methyl-GMP + diphosphate + H(+). In terms of biological role, nucleoside triphosphate pyrophosphatase that hydrolyzes 7-methyl-GTP (m(7)GTP). May have a dual role in cell division arrest and in preventing the incorporation of modified nucleotides into cellular nucleic acids. In Yersinia pestis bv. Antiqua (strain Antiqua), this protein is 7-methyl-GTP pyrophosphatase.